Consider the following 116-residue polypeptide: uncharacterized protein (116 aa).

The chain crosses the membrane as a helical span at residues Tyr20–Leu42. Residues Ile95–Glu116 form a disordered region.

It localises to the membrane. This is an uncharacterized protein from Saccharomyces cerevisiae (strain ATCC 204508 / S288c) (Baker's yeast).